The primary structure comprises 433 residues: Putative wall-associated receptor kinase-like 16 (433 aa).

The first 22 residues, 1 to 22 (MKLQHVVYLVAIFFVVAIFVIA), serve as a signal peptide directing secretion. At 23–29 (CIEENKY) the chain is on the extracellular side. A helical membrane pass occupies residues 30-50 (LVWIMIILANTTNILSLVRSI). Topologically, residues 51–433 (SYIKNIRKHQ…VARFDIEAGR (383 aa)) are cytoplasmic. The residue at position 97 (T97) is a Phosphothreonine. The 284-residue stretch at 108 to 391 (YDVSRILGQG…RAKTTKHNWL (284 aa)) folds into the Protein kinase domain. ATP-binding positions include 114–122 (LGQGGQWTV) and K136. At Y181 the chain carries Phosphotyrosine. The Proton acceptor role is filled by D233. 2 positions are modified to phosphothreonine: T267 and T272. Residue Y280 is modified to Phosphotyrosine.

This sequence belongs to the protein kinase superfamily. Ser/Thr protein kinase family.

It is found in the membrane. The enzyme catalyses L-seryl-[protein] + ATP = O-phospho-L-seryl-[protein] + ADP + H(+). The catalysed reaction is L-threonyl-[protein] + ATP = O-phospho-L-threonyl-[protein] + ADP + H(+). Putative serine/threonine-protein kinase that may function as a signaling receptor of extracellular matrix component. This is Putative wall-associated receptor kinase-like 16 (WAKL16) from Arabidopsis thaliana (Mouse-ear cress).